A 194-amino-acid polypeptide reads, in one-letter code: uncharacterized protein (194 aa).

This is an uncharacterized protein from Haemophilus influenzae (strain ATCC 51907 / DSM 11121 / KW20 / Rd).